Here is a 529-residue protein sequence, read N- to C-terminus: Cytochrome P450 monooxygenase acuD (529 aa).

The chain crosses the membrane as a helical span at residues 8-28 (FAVIAASAAAVAGVLFLIYAA). An N-linked (GlcNAc...) asparagine glycan is attached at asparagine 81. Cysteine 449 lines the heme pocket.

It belongs to the cytochrome P450 family. Heme is required as a cofactor.

It is found in the endoplasmic reticulum membrane. It catalyses the reaction 3-hydroxybenzyl alcohol + reduced [NADPH--hemoprotein reductase] + O2 = gentisyl alcohol + oxidized [NADPH--hemoprotein reductase] + H2O + H(+). It functions in the pathway secondary metabolite biosynthesis. Functionally, cytochrome P450 monooxygenase; part of the gene cluster that mediates the biosynthesis of aculins. The pathway begins with the synthesis of 6-methylsalicylic acid by the polyketide synthase (PKS) acuA via condensation of acetate and malonate units. The 6-methylsalicylic acid decarboxylase acuB then catalyzes the decarboxylation of 6-methylsalicylic acid to yield m-cresol (also known as 3-methylphenol). These first reactions occur in the cytosol. The intermediate m-cresol is then transported into the endoplasmic reticulum where the cytochrome P450 monooxygenase acuC converts it to m-hydroxybenzyl alcohol, which is further converted to gentisyl alcohol by the cytochrome P450 monooxygenase acuD. Gentisyl alcohol is further oxidized by the oxidoreductase acuE that probably catalyzes hydroxylation of the aromatic ring. The aromatic system might then be opened by oxidation through a Baeyer-Villiger type of oxidation, which could be catalyzed by acuF, with the carboxylic acid at C-1 subsequently reduced to an aldehyde by acuG. Subsequently, a hemiacetal is formed, before the dehydrogenase acuH would reduce the double bond between C-4 and C-6. Finally, keto-enol tautomerism results in formation of aculinic acid, which exists as two diastereomers (both R/S configurations at C-1) by non-enzymatic hemiacetal formation. The carboxypeptidase acuI could be involved in the linking of aculinic acid to an aculene A moiety produced by the aculene biosynthesis cluster and which leads to the production of aculin A. AcuI may also be involved in the attachment of proline to aculinic acid to form epi-aculins A and B. The sequence is that of Cytochrome P450 monooxygenase acuD from Aspergillus aculeatus (strain ATCC 16872 / CBS 172.66 / WB 5094).